Reading from the N-terminus, the 90-residue chain is UPF0297 protein lmo1503 (90 aa).

Belongs to the UPF0297 family.

This Listeria monocytogenes serovar 1/2a (strain ATCC BAA-679 / EGD-e) protein is UPF0297 protein lmo1503.